The primary structure comprises 525 residues: Protein BSP1 (525 aa).

Disordered stretches follow at residues 21-40 (INKP…TPIE), 98-262 (QQQH…PSKM), 285-325 (LSSE…VPPK), and 339-525 (DKTG…PTKI). Residues 110-122 (IEPVRHIIPDRHS) show a composition bias toward basic and acidic residues. A compositionally biased stretch (polar residues) spans 148 to 162 (NRASSENVVKSTTSA). 3 stretches are compositionally biased toward basic and acidic residues: residues 171-182 (YKDDITAKKLDV), 201-223 (DKNK…EDNK), and 230-242 (KDQD…KPTR). Residues 251 to 261 (QLKSPPQSPSK) show a composition bias toward polar residues. The segment covering 285-297 (LSSEENSRSSLSE) has biased composition (low complexity). Composition is skewed to basic and acidic residues over residues 314–325 (KAEKKKPVVPPK) and 339–354 (DKTG…EPEF). The span at 382–398 (QNLSKNTENKKSVAQSK) shows a compositional bias: polar residues. Over residues 447-456 (EESEISDSEP) the composition is skewed to acidic residues. Basic residues predominate over residues 510–525 (NKSRSRGPKRKLPTKI).

The protein localises to the cell membrane. The protein resides in the cytoplasm. It localises to the cytoskeleton. Its subcellular location is the actin patch. In terms of biological role, cortical patch protein involved in endocytosis. This chain is Protein BSP1 (BSP1), found in Candida glabrata (strain ATCC 2001 / BCRC 20586 / JCM 3761 / NBRC 0622 / NRRL Y-65 / CBS 138) (Yeast).